A 345-amino-acid chain; its full sequence is tRNA dimethylallyltransferase (345 aa).

Gly-9–Ser-16 is a binding site for ATP. Thr-11–Ser-16 contributes to the substrate binding site. Interaction with substrate tRNA stretches follow at residues Asp-34–Gln-37 and Gln-195–Arg-199.

The protein belongs to the IPP transferase family. As to quaternary structure, monomer. It depends on Mg(2+) as a cofactor.

The enzyme catalyses adenosine(37) in tRNA + dimethylallyl diphosphate = N(6)-dimethylallyladenosine(37) in tRNA + diphosphate. Functionally, catalyzes the transfer of a dimethylallyl group onto the adenine at position 37 in tRNAs that read codons beginning with uridine, leading to the formation of N6-(dimethylallyl)adenosine (i(6)A). The sequence is that of tRNA dimethylallyltransferase from Orientia tsutsugamushi (strain Boryong) (Rickettsia tsutsugamushi).